A 93-amino-acid chain; its full sequence is Putative hemolysin E-like protein (93 aa).

It belongs to the hemolysin E family.

This is Putative hemolysin E-like protein from Escherichia coli O6:H1 (strain CFT073 / ATCC 700928 / UPEC).